We begin with the raw amino-acid sequence, 469 residues long: 3-isopropylmalate dehydratase large subunit (469 aa).

The [4Fe-4S] cluster site is built by Cys347, Cys410, and Cys413.

Belongs to the aconitase/IPM isomerase family. LeuC type 1 subfamily. Heterodimer of LeuC and LeuD. It depends on [4Fe-4S] cluster as a cofactor.

It carries out the reaction (2R,3S)-3-isopropylmalate = (2S)-2-isopropylmalate. Its pathway is amino-acid biosynthesis; L-leucine biosynthesis; L-leucine from 3-methyl-2-oxobutanoate: step 2/4. Functionally, catalyzes the isomerization between 2-isopropylmalate and 3-isopropylmalate, via the formation of 2-isopropylmaleate. This is 3-isopropylmalate dehydratase large subunit from Burkholderia mallei (strain NCTC 10247).